The chain runs to 136 residues: Protein PsiE homolog (136 aa).

A run of 4 helical transmembrane segments spans residues A15–L35, V58–F78, F82–I102, and P108–C128.

It belongs to the PsiE family.

It localises to the cell inner membrane. The polypeptide is Protein PsiE homolog (Klebsiella pneumoniae subsp. pneumoniae (strain ATCC 700721 / MGH 78578)).